A 171-amino-acid polypeptide reads, in one-letter code: bZIP transcription factor 2 (171 aa).

Over residues 1–24 (MASSSSTYRSSSSSDGGNNNPSDS) the composition is skewed to low complexity. Positions 1–54 (MASSSSTYRSSSSSDGGNNNPSDSVVTVDERKRKRMLSNRESARRSRMRKQKHV) are disordered. The bZIP domain maps to 29–92 (DERKRKRMLS…MKIQAENSVL (64 aa)). The basic motif stretch occupies residues 31-52 (RKRKRMLSNRESARRSRMRKQK). The leucine-zipper stretch occupies residues 57 to 71 (LTAQINQLSNDNRQI).

In terms of assembly, forms heterodimers with BZIP9, BZIP10, BZIP25 and BZIP63. Component of a ternary complex composed of BZIP2-BZIP63 heterodimer and KIN10.

It is found in the nucleus. In terms of biological role, transcription factor that binds to specific DNA sequences in target gene promoters. BZIP2-BZIP63-KIN10 complex binds to the ETFQO promoter to up-regulate its transcription. The polypeptide is bZIP transcription factor 2 (Arabidopsis thaliana (Mouse-ear cress)).